Here is a 428-residue protein sequence, read N- to C-terminus: Serine--tRNA ligase (428 aa).

235–237 (TAE) is an L-serine binding site. Residue 266–268 (RSE) coordinates ATP. Glutamate 289 serves as a coordination point for L-serine. An ATP-binding site is contributed by 353-356 (EISS). L-serine is bound at residue serine 389.

It belongs to the class-II aminoacyl-tRNA synthetase family. Type-1 seryl-tRNA synthetase subfamily. Homodimer. The tRNA molecule binds across the dimer.

The protein localises to the cytoplasm. It carries out the reaction tRNA(Ser) + L-serine + ATP = L-seryl-tRNA(Ser) + AMP + diphosphate + H(+). It catalyses the reaction tRNA(Sec) + L-serine + ATP = L-seryl-tRNA(Sec) + AMP + diphosphate + H(+). Its pathway is aminoacyl-tRNA biosynthesis; selenocysteinyl-tRNA(Sec) biosynthesis; L-seryl-tRNA(Sec) from L-serine and tRNA(Sec): step 1/1. Functionally, catalyzes the attachment of serine to tRNA(Ser). Is also able to aminoacylate tRNA(Sec) with serine, to form the misacylated tRNA L-seryl-tRNA(Sec), which will be further converted into selenocysteinyl-tRNA(Sec). This chain is Serine--tRNA ligase, found in Shewanella pealeana (strain ATCC 700345 / ANG-SQ1).